We begin with the raw amino-acid sequence, 367 residues long: tRNA-specific 2-thiouridylase MnmA (367 aa).

Residues 9 to 16 and Met35 contribute to the ATP site; that span reads GLSGGVDS. An interaction with target base in tRNA region spans residues 95–97; the sequence is NPD. Cys100 (nucleophile) is an active-site residue. Residues Cys100 and Cys196 are joined by a disulfide bond. An ATP-binding site is contributed by Gly124. An interaction with tRNA region spans residues 146-148; sequence KDQ. Cys196 serves as the catalytic Cysteine persulfide intermediate. Residues 308–309 are interaction with tRNA; it reads RY.

This sequence belongs to the MnmA/TRMU family.

It localises to the cytoplasm. The enzyme catalyses S-sulfanyl-L-cysteinyl-[protein] + uridine(34) in tRNA + AH2 + ATP = 2-thiouridine(34) in tRNA + L-cysteinyl-[protein] + A + AMP + diphosphate + H(+). Functionally, catalyzes the 2-thiolation of uridine at the wobble position (U34) of tRNA, leading to the formation of s(2)U34. This chain is tRNA-specific 2-thiouridylase MnmA, found in Nitrosococcus oceani (strain ATCC 19707 / BCRC 17464 / JCM 30415 / NCIMB 11848 / C-107).